Consider the following 242-residue polypeptide: Carboxy-S-adenosyl-L-methionine synthase (242 aa).

S-adenosyl-L-methionine is bound by residues Tyr39, 64 to 66 (GCS), 89 to 90 (DN), 117 to 118 (DI), Asn132, and Arg199.

The protein belongs to the class I-like SAM-binding methyltransferase superfamily. Cx-SAM synthase family. As to quaternary structure, homodimer.

The catalysed reaction is prephenate + S-adenosyl-L-methionine = carboxy-S-adenosyl-L-methionine + 3-phenylpyruvate + H2O. Functionally, catalyzes the conversion of S-adenosyl-L-methionine (SAM) to carboxy-S-adenosyl-L-methionine (Cx-SAM). In Aliivibrio salmonicida (strain LFI1238) (Vibrio salmonicida (strain LFI1238)), this protein is Carboxy-S-adenosyl-L-methionine synthase.